A 120-amino-acid chain; its full sequence is MLVTVEFTYILILFFISLGLSIILFFLGYFLMFKVAYEDKLMGYECGFDPFGNARGEFDIRFYLVAILFLIFDLEITFLFPFSVSIMSMTLFSYSIMLIFLIILTIGFIYEIKKGALDWS.

3 helical membrane passes run 10 to 30, 62 to 82, and 89 to 109; these read ILILFFISLGLSIILFFLGYF, FYLVAILFLIFDLEITFLFPF, and MTLFSYSIMLIFLIILTIGFI.

Belongs to the complex I subunit 3 family.

It is found in the mitochondrion membrane. It carries out the reaction a ubiquinone + NADH + 5 H(+)(in) = a ubiquinol + NAD(+) + 4 H(+)(out). Its function is as follows. Core subunit of the mitochondrial membrane respiratory chain NADH dehydrogenase (Complex I) that is believed to belong to the minimal assembly required for catalysis. Complex I functions in the transfer of electrons from NADH to the respiratory chain. The immediate electron acceptor for the enzyme is believed to be ubiquinone. This is NADH-ubiquinone oxidoreductase chain 3 (nad3) from Dictyostelium citrinum (Slime mold).